The sequence spans 444 residues: Magnesium transporter MRS2-F (444 aa).

A disordered region spans residues 128 to 155 (FTDMEGESSAVTSPFPALTSTTPNELEM). Polar residues predominate over residues 145–155 (LTSTTPNELEM). Residues 195–258 (VCLESACRSL…QKVRDELEHL (64 aa)) adopt a coiled-coil conformation. The chain crosses the membrane as a helical span at residues 370-390 (GVMLSTATVVITAGVAVVGLF). Residues 391–393 (GMN) carry the Required for magnesium transport activity motif. A helical transmembrane segment spans residues 415 to 435 (FWETTLGTIAGCTVMYIVAMG).

This sequence belongs to the CorA metal ion transporter (MIT) (TC 1.A.35.5) family.

Its subcellular location is the membrane. In terms of biological role, magnesium transporter that may mediate the influx of magnesium. This chain is Magnesium transporter MRS2-F (MRS2-F), found in Oryza sativa subsp. indica (Rice).